The primary structure comprises 229 residues: NAD(P)H-hydrate epimerase (229 aa).

Residues 11–222 enclose the YjeF N-terminal domain; sequence YAAADIRAAE…DVGLDLSGAT (212 aa). 59 to 63 provides a ligand contact to (6S)-NADPHX; sequence NNGGD. 2 residues coordinate K(+): Asn60 and Asp124. (6S)-NADPHX-binding positions include 128-136 and Asp164; that span reads GIGTTASPA. K(+) is bound at residue Ser167.

The protein belongs to the NnrE/AIBP family. K(+) is required as a cofactor.

It carries out the reaction (6R)-NADHX = (6S)-NADHX. The enzyme catalyses (6R)-NADPHX = (6S)-NADPHX. Its function is as follows. Catalyzes the epimerization of the S- and R-forms of NAD(P)HX, a damaged form of NAD(P)H that is a result of enzymatic or heat-dependent hydration. This is a prerequisite for the S-specific NAD(P)H-hydrate dehydratase to allow the repair of both epimers of NAD(P)HX. The protein is NAD(P)H-hydrate epimerase of Clavibacter sepedonicus (Clavibacter michiganensis subsp. sepedonicus).